Here is a 545-residue protein sequence, read N- to C-terminus: Capsular polysaccharide phosphotransferase SacB (545 aa).

This sequence belongs to the stealth family.

Functionally, part of a capsular biosynthesis operon and has been suggested to be the polymerase that links individual UDP-N-acetyl-D-mannosamine monomers. In serotype A the capsule is composed of repeated units of (alpha 1-6)-linked N-acetyl-D-mannosamine-1-phosphate. Non-polar disruption of this open reading frame prevented capsule synthesis. This chain is Capsular polysaccharide phosphotransferase SacB (sacB), found in Neisseria meningitidis serogroup A.